A 396-amino-acid polypeptide reads, in one-letter code: Ribosomal RNA large subunit methyltransferase I (396 aa).

Residues 2-81 form the PUA domain; the sequence is SVRLVLAKGR…ESIDIAFFSR (80 aa).

It belongs to the methyltransferase superfamily. RlmI family.

The protein resides in the cytoplasm. The enzyme catalyses cytidine(1962) in 23S rRNA + S-adenosyl-L-methionine = 5-methylcytidine(1962) in 23S rRNA + S-adenosyl-L-homocysteine + H(+). Functionally, specifically methylates the cytosine at position 1962 (m5C1962) of 23S rRNA. The protein is Ribosomal RNA large subunit methyltransferase I of Shigella boydii serotype 4 (strain Sb227).